We begin with the raw amino-acid sequence, 342 residues long: N-acetyl-gamma-glutamyl-phosphate reductase (342 aa).

Residue C147 is part of the active site.

This sequence belongs to the NAGSA dehydrogenase family. Type 1 subfamily.

It is found in the cytoplasm. It carries out the reaction N-acetyl-L-glutamate 5-semialdehyde + phosphate + NADP(+) = N-acetyl-L-glutamyl 5-phosphate + NADPH + H(+). Its pathway is amino-acid biosynthesis; L-arginine biosynthesis; N(2)-acetyl-L-ornithine from L-glutamate: step 3/4. Functionally, catalyzes the NADPH-dependent reduction of N-acetyl-5-glutamyl phosphate to yield N-acetyl-L-glutamate 5-semialdehyde. The polypeptide is N-acetyl-gamma-glutamyl-phosphate reductase (Campylobacter jejuni subsp. jejuni serotype O:2 (strain ATCC 700819 / NCTC 11168)).